The chain runs to 463 residues: Paraneoplastic antigen Ma3 (463 aa).

The disordered stretch occupies residues 363–410 (VGAVPLPASGNSFDARPSQGYRRRRGRGQHRRGGVARAGSRGSRKRKR). Over residues 383 to 396 (YRRRRGRGQHRRGG) the composition is skewed to basic residues. The segment at 412 to 429 (TFCYSCGEDGHIRVQCIN) adopts a CCHC-type zinc-finger fold. The interval 440–463 (KQAAVESGNGNWAWDKSHPKSKAK) is disordered.

This sequence belongs to the PNMA family. As to expression, expressed at high levels in the brain and testis. Expressed at lower levels in the heart, trachea and kidney.

It is found in the nucleus. It localises to the nucleolus. The sequence is that of Paraneoplastic antigen Ma3 (PNMA3) from Homo sapiens (Human).